Here is a 667-residue protein sequence, read N- to C-terminus: Acetoacetyl-CoA synthetase (667 aa).

The protein belongs to the ATP-dependent AMP-binding enzyme family.

It is found in the cytoplasm. It localises to the cytosol. It catalyses the reaction acetoacetate + ATP + CoA = acetoacetyl-CoA + AMP + diphosphate. Its function is as follows. Converts acetoacetate to acetoacetyl-CoA in the cytosol. Ketone body-utilizing enzyme, responsible for the synthesis of cholesterol and fatty acids. The protein is Acetoacetyl-CoA synthetase (AACS) of Gallus gallus (Chicken).